The following is a 144-amino-acid chain: Phospholipase A2, membrane associated (144 aa).

A signal peptide spans 1 to 20; the sequence is MKTLLLLAVIMAIGLLQVHG. 7 disulfide bridges follow: C46/C137, C48/C64, C63/C117, C69/C144, C70/C110, C79/C103, and C97/C108. Ca(2+) is bound by residues Y47, G49, and S51. H67 is a catalytic residue. Residue D68 coordinates Ca(2+). D111 is an active-site residue.

It belongs to the phospholipase A2 family. Ca(2+) serves as cofactor.

The protein resides in the secreted. Its subcellular location is the cell membrane. It is found in the mitochondrion outer membrane. The enzyme catalyses a 1,2-diacyl-sn-glycero-3-phosphoethanolamine + H2O = a 1-acyl-sn-glycero-3-phosphoethanolamine + a fatty acid + H(+). It carries out the reaction 1-hexadecanoyl-2-(9Z-octadecenoyl)-sn-glycero-3-phosphoethanolamine + H2O = 1-hexadecanoyl-sn-glycero-3-phosphoethanolamine + (9Z)-octadecenoate + H(+). The catalysed reaction is 1-hexadecanoyl-2-(9Z,12Z-octadecadienoyl)-sn-glycero-3-phosphoethanolamine + H2O = 1-hexadecanoyl-sn-glycero-3-phosphoethanolamine + (9Z,12Z)-octadecadienoate + H(+). It catalyses the reaction 1-hexadecanoyl-2-(5Z,8Z,11Z,14Z-eicosatetraenoyl)-sn-glycero-3-phosphoethanolamine + H2O = 1-hexadecanoyl-sn-glycero-3-phosphoethanolamine + (5Z,8Z,11Z,14Z)-eicosatetraenoate + H(+). The enzyme catalyses N-hexadecanoyl-1,2-di-(9Z-octadecenoyl)-sn-glycero-3-phosphoethanolamine + H2O = N-hexadecanoyl-1-(9Z-octadecenoyl)-sn-glycero-3-phosphoethanolamine + (9Z)-octadecenoate + H(+). It carries out the reaction 1,2-dihexadecanoyl-sn-glycero-3-phospho-(1'-sn-glycerol) + H2O = 1-hexadecanoyl-sn-glycero-3-phospho-(1'-sn-glycerol) + hexadecanoate + H(+). The catalysed reaction is 1-hexadecanoyl-2-(9Z-octadecenoyl)-sn-glycero-3-phosphoglycerol + H2O = 1-hexadecanoyl-sn-glycero-3-phosphoglycerol + (9Z)-octadecenoate + H(+). It catalyses the reaction 1-hexadecanoyl-2-(9Z-octadecenoyl)-sn-glycero-3-phospho-(1'-sn-glycerol) + H2O = 1-hexadecanoyl-sn-glycero-3-phospho-(1'-sn-glycerol) + (9Z)-octadecenoate + H(+). The enzyme catalyses a 1,2-diacyl-sn-glycero-3-phosphocholine + H2O = a 1-acyl-sn-glycero-3-phosphocholine + a fatty acid + H(+). It carries out the reaction 1,2-dihexadecanoyl-sn-glycero-3-phosphocholine + H2O = 1-hexadecanoyl-sn-glycero-3-phosphocholine + hexadecanoate + H(+). The catalysed reaction is 1-hexadecanoyl-2-(9Z-octadecenoyl)-sn-glycero-3-phosphocholine + H2O = 1-hexadecanoyl-sn-glycero-3-phosphocholine + (9Z)-octadecenoate + H(+). It catalyses the reaction 1-hexadecanoyl-2-(9Z,12Z-octadecadienoyl)-sn-glycero-3-phosphocholine + H2O = (9Z,12Z)-octadecadienoate + 1-hexadecanoyl-sn-glycero-3-phosphocholine + H(+). The enzyme catalyses 1-hexadecanoyl-2-(4Z,7Z,10Z,13Z,16Z,19Z-docosahexaenoyl)-sn-glycero-3-phosphocholine + H2O = (4Z,7Z,10Z,13Z,16Z,19Z)-docosahexaenoate + 1-hexadecanoyl-sn-glycero-3-phosphocholine + H(+). Functionally, secretory calcium-dependent phospholipase A2 that primarily targets extracellular phospholipids with implications in host antimicrobial defense, inflammatory response and tissue regeneration. Hydrolyzes the ester bond of the fatty acyl group attached at sn-2 position of phospholipids (phospholipase A2 activity) with preference for phosphatidylethanolamines and phosphatidylglycerols over phosphatidylcholines. Contributes to lipid remodeling of cellular membranes and generation of lipid mediators involved in pathogen clearance. Displays bactericidal activity against Gram-positive bacteria by directly hydrolyzing phospholipids of the bacterial membrane. Upon sterile inflammation, targets membrane phospholipids of extracellular mitochondria released from activated platelets, generating free unsaturated fatty acids such as arachidonate that is used by neighboring leukocytes to synthesize inflammatory eicosanoids such as leukotrienes. Simultaneously, by compromising mitochondrial membrane integrity, promotes the release in circulation of potent damage-associated molecular pattern molecules that activate the innate immune response. Plays a stem cell regulator role in the intestinal crypt. Within intracellular compartment mediates Paneth cell differentiation and its stem cell supporting functions by inhibiting Wnt signaling pathway in intestinal stem cell (ICS). Secreted in the intestinal lumen upon inflammation, acts in an autocrine way and promotes prostaglandin E2 synthesis that stimulates Wnt signaling pathway in ICS cells and tissue regeneration. May play a role in the biosynthesis of N-acyl ethanolamines that regulate energy metabolism and inflammation. Hydrolyzes N-acyl phosphatidylethanolamines to N-acyl lysophosphatidylethanolamines, which are further cleaved by a lysophospholipase D to release N-acyl ethanolamines. Independent of its catalytic activity, acts as a ligand for integrins. Binds to and activates integrins ITGAV:ITGB3, ITGA4:ITGB1 and ITGA5:ITGB1. Binds to a site (site 2) which is distinct from the classical ligand-binding site (site 1) and induces integrin conformational changes and enhanced ligand binding to site 1. Induces cell proliferation in an integrin-dependent manner. This Bos taurus (Bovine) protein is Phospholipase A2, membrane associated (PLA2G2A).